A 249-amino-acid chain; its full sequence is DNA repair protein RecO (249 aa).

The protein belongs to the RecO family.

Functionally, involved in DNA repair and RecF pathway recombination. The polypeptide is DNA repair protein RecO (Exiguobacterium sp. (strain ATCC BAA-1283 / AT1b)).